The following is a 576-amino-acid chain: Adenine deaminase 2 (576 aa).

It belongs to the metallo-dependent hydrolases superfamily. Adenine deaminase family. The cofactor is Mn(2+).

It carries out the reaction adenine + H2O + H(+) = hypoxanthine + NH4(+). This chain is Adenine deaminase 2, found in Desulfotalea psychrophila (strain LSv54 / DSM 12343).